The sequence spans 447 residues: Glutamate--tRNA ligase 1 (447 aa).

Positions 10–20 (PSPTGMLHVGN) match the 'HIGH' region motif. Residues 240–244 (KISKR) carry the 'KMSKS' region motif. Residue Lys-243 coordinates ATP.

The protein belongs to the class-I aminoacyl-tRNA synthetase family. Glutamate--tRNA ligase type 1 subfamily. Monomer.

It localises to the cytoplasm. It carries out the reaction tRNA(Glu) + L-glutamate + ATP = L-glutamyl-tRNA(Glu) + AMP + diphosphate. Catalyzes the attachment of glutamate to tRNA(Glu) in a two-step reaction: glutamate is first activated by ATP to form Glu-AMP and then transferred to the acceptor end of tRNA(Glu). The protein is Glutamate--tRNA ligase 1 of Rickettsia akari (strain Hartford).